The following is a 426-amino-acid chain: MLKCVMSGSQVKVFGKAVQALSRISDEFWLDPSKKGLALRCVNSSRSAYGCVLFSPVFFQHYQWSALVKMSENELDTTLHLKCKLGMKSILPIFRCLNSLERNIEKCRIFTRSDKCKVVIQFFYRHGIKRTHNICFQESQPLQVIFDKNVCTNTLMIQPRLLADAIVLFTSSQEEVTLAVTPLNFCLKSSNEESMDLSNAVHSEMFVGSDEFDFFQIGMDTEITFCFKELKGILTFSEATHAPISIYFDFPGKPLALSIDDMLVEANFILATLADEQSRASSPQSLCLSQKRKRSDLIEKKAGKNVTGQALECISKKAAPRRLYPKETLTNISALENCGSPAMKRVDGDVSEVSESSVSNTEEVPGSLCLRKFSCMFFGAVSSDQQEHFNHPFDSLARASDSEEDMNNVCCRKEFNGSDAKYFCII.

The residue at position 359 (serine 359) is a Phosphoserine.

It belongs to the rad9 family. As to quaternary structure, interacts with HUS1, HUS1B, RAD1, RAD9A and RAD17. As to expression, expressed in testis and skeletal muscle.

The sequence is that of Cell cycle checkpoint control protein RAD9B (RAD9B) from Homo sapiens (Human).